A 405-amino-acid chain; its full sequence is S-arrestin (405 aa).

Position 234 is a phosphothreonine (Thr-234).

This sequence belongs to the arrestin family. In terms of assembly, monomer. Homodimer. Homotetramer. Interacts with RHO (via the phosphorylated C-terminus). As to expression, detected in retina, in the proximal portion of the outer segment of rod photoreceptor cells (at protein level).

It localises to the cell projection. The protein localises to the cilium. Its subcellular location is the photoreceptor outer segment. It is found in the membrane. Functionally, binds to photoactivated, phosphorylated RHO and terminates RHO signaling via G-proteins by competing with G-proteins for the same binding site on RHO. May play a role in preventing light-dependent degeneration of retinal photoreceptor cells. The polypeptide is S-arrestin (SAG) (Homo sapiens (Human)).